Consider the following 170-residue polypeptide: Sec-independent protein translocase protein TatB (170 aa).

A helical membrane pass occupies residues 1 to 21 (MIDLGISKLALIGAVALIVIG).

Belongs to the TatB family. As to quaternary structure, the Tat system comprises two distinct complexes: a TatABC complex, containing multiple copies of TatA, TatB and TatC subunits, and a separate TatA complex, containing only TatA subunits. Substrates initially bind to the TatABC complex, which probably triggers association of the separate TatA complex to form the active translocon.

The protein localises to the cell inner membrane. Functionally, part of the twin-arginine translocation (Tat) system that transports large folded proteins containing a characteristic twin-arginine motif in their signal peptide across membranes. Together with TatC, TatB is part of a receptor directly interacting with Tat signal peptides. TatB may form an oligomeric binding site that transiently accommodates folded Tat precursor proteins before their translocation. This Cupriavidus necator (strain ATCC 17699 / DSM 428 / KCTC 22496 / NCIMB 10442 / H16 / Stanier 337) (Ralstonia eutropha) protein is Sec-independent protein translocase protein TatB.